A 413-amino-acid chain; its full sequence is MQRERMSKKKISQVHCIPSGDHILMTASSSKHIPHIRFYKAWKGNNRFCCGGRLIFGPDVSSLYLTSFLIGAPALTFCIRMLVWIKRGDPFFNYTVLASGFILTLLDFTFLMLTSARDPGIIPRNKTSMILEDDSDSSLTQSMEWVNNKTPNLKIPRTKDVFVNGYTIKVKFCDTCLLYRPPRASHCSICNNCVQRFDHHCPWVGQCIARRNYPFFICFISSSTLLCIYVFVFSWINLIRQPGKLWRTMSDDIVSVILIVYTFVAVWFVGGLTIFHFYLMSTNQTTYENFRYRYDKKENPYKRGLLKNVKEVLFAKIPPSQLDLRAMVPEEDDMTIASNDSEYESEYTSSVRYDTEMGGKLIKRDSPRKLPLPTRNLDDIKDISDNYDRSTTTREDASDRDPSFFSSQLDLPK.

Transmembrane regions (helical) follow at residues 65-85 (LTSF…LVWI) and 96-116 (VLAS…LTSA). The DHHC domain maps to 171 to 221 (KFCDTCLLYRPPRASHCSICNNCVQRFDHHCPWVGQCIARRNYPFFICFIS). The active-site S-palmitoyl cysteine intermediate is Cys201. 2 consecutive transmembrane segments (helical) span residues 216–236 (FICF…FSWI) and 255–275 (SVIL…LTIF). Positions 364–413 (RDSPRKLPLPTRNLDDIKDISDNYDRSTTTREDASDRDPSFFSSQLDLPK) are disordered. The segment covering 376-402 (NLDDIKDISDNYDRSTTTREDASDRDP) has biased composition (basic and acidic residues). Positions 404 to 413 (FFSSQLDLPK) are enriched in polar residues.

The protein belongs to the DHHC palmitoyltransferase family. Expressed in flowers and pollen.

The protein localises to the endoplasmic reticulum membrane. It localises to the cytoplasmic vesicle membrane. It catalyses the reaction L-cysteinyl-[protein] + hexadecanoyl-CoA = S-hexadecanoyl-L-cysteinyl-[protein] + CoA. In terms of biological role, palmitoyl acyltransferase. This is Probable protein S-acyltransferase 3 (PAT03) from Arabidopsis thaliana (Mouse-ear cress).